Here is a 210-residue protein sequence, read N- to C-terminus: MEAIGPNKHGNPFIGHEHTLYDISPGHVYAKSKRMVEQLVTKANNSVIMNGAKLYTCCLRPTGIYGGGDKLTKVFYEQCTQHGNIMYRTVDDDAVHSRVYVGNVAWMHVLAVKYIQYPGSEIKGNAYFCYGYSPSCSYDMFNLLLMKPLGIEQGSRIPRWMLKMYTCKNDMKRILFRKPSLLNNYTLKISNTTFEARQQCRTRFQLLPYL.

The Proton acceptor role is filled by Tyr29. An NAD(+)-binding site is contributed by Lys33.

Belongs to the 3-beta-HSD family.

It carries out the reaction a 3beta-hydroxy-Delta(5)-steroid + NAD(+) = a 3-oxo-Delta(5)-steroid + NADH + H(+). The catalysed reaction is a 3-oxo-Delta(5)-steroid = a 3-oxo-Delta(4)-steroid. Its pathway is lipid metabolism; steroid biosynthesis. In terms of biological role, catalyzes the oxidative conversion of Delta(5)-ene-3-beta-hydroxy steroid, and the oxidative conversion of ketosteroids. The 3-beta-HSD enzymatic system plays a crucial role in the biosynthesis of all classes of hormonal steroids. During viral infection, steroid production contributes to virulence by inhibiting the host inflammatory response. This chain is 3 beta-hydroxysteroid dehydrogenase/Delta 5--&gt;4-isomerase (OPG174), found in Variola virus (isolate Human/India/Ind3/1967) (VARV).